A 100-amino-acid polypeptide reads, in one-letter code: MVRYHVRSPSERPHREYRQLVNGQEQGRHGQEEQGMSAEGVEGYGRTHQGCYGYRRRLCSRRRLYRVHRRQRRSCRRRCCRYRRRNRRGCRTRRRTCRRH.

A disordered region spans residues methionine 1–glycine 45. Serine 8, serine 10, and serine 37 each carry phosphoserine. A compositionally biased stretch (basic and acidic residues) spans serine 8–arginine 18.

It belongs to the protamine P2 family. Interacts with TDRP. In terms of processing, proteolytic processing into mature chains is required for histone eviction during spermatogenesis. Transition proteins (TNP1 and TNP2) are required for processing. In terms of tissue distribution, testis.

The protein localises to the nucleus. The protein resides in the chromosome. Protamines substitute for histones in the chromatin of sperm during the haploid phase of spermatogenesis. They compact sperm DNA into a highly condensed, stable and inactive complex. The protein is Protamine-2 (PRM2) of Alouatta seniculus (Red howler monkey).